Consider the following 393-residue polypeptide: ATP phosphoribosyltransferase regulatory subunit (393 aa).

It belongs to the class-II aminoacyl-tRNA synthetase family. HisZ subfamily. In terms of assembly, heteromultimer composed of HisG and HisZ subunits.

The protein localises to the cytoplasm. The protein operates within amino-acid biosynthesis; L-histidine biosynthesis; L-histidine from 5-phospho-alpha-D-ribose 1-diphosphate: step 1/9. In terms of biological role, required for the first step of histidine biosynthesis. May allow the feedback regulation of ATP phosphoribosyltransferase activity by histidine. The protein is ATP phosphoribosyltransferase regulatory subunit of Nitrosospira multiformis (strain ATCC 25196 / NCIMB 11849 / C 71).